Here is a 258-residue protein sequence, read N- to C-terminus: Tryptophan synthase alpha chain (258 aa).

Active-site proton acceptor residues include E47 and D58.

This sequence belongs to the TrpA family. As to quaternary structure, tetramer of two alpha and two beta chains.

The catalysed reaction is (1S,2R)-1-C-(indol-3-yl)glycerol 3-phosphate + L-serine = D-glyceraldehyde 3-phosphate + L-tryptophan + H2O. The protein operates within amino-acid biosynthesis; L-tryptophan biosynthesis; L-tryptophan from chorismate: step 5/5. In terms of biological role, the alpha subunit is responsible for the aldol cleavage of indoleglycerol phosphate to indole and glyceraldehyde 3-phosphate. The polypeptide is Tryptophan synthase alpha chain (Bacillus anthracis (strain CDC 684 / NRRL 3495)).